The primary structure comprises 354 residues: Thiamine thiazole synthase 1, chloroplastic (354 aa).

The N-terminal 43 residues, 1–43, are a transit peptide targeting the chloroplast; it reads MATTAASSLLKSSFAGSRLPSATRAPSSVVVSTGGAPRTAAIS. Substrate is bound by residues Ala-96, 116–117, Gly-124, and Val-190; that span reads EQ. Cys-219 bears the 2,3-didehydroalanine (Cys) mark. Residues Asp-221, His-236, Met-288, and 298-300 each bind substrate; that span reads RMG.

The protein belongs to the THI4 family. As to quaternary structure, homooctamer. The cofactor is Fe cation. During the catalytic reaction, a sulfide is transferred from Cys-219 to a reaction intermediate, generating a dehydroalanine residue.

It is found in the plastid. Its subcellular location is the chloroplast. It catalyses the reaction [ADP-thiazole synthase]-L-cysteine + glycine + NAD(+) = [ADP-thiazole synthase]-dehydroalanine + ADP-5-ethyl-4-methylthiazole-2-carboxylate + nicotinamide + 3 H2O + 2 H(+). In terms of biological role, involved in biosynthesis of the thiamine precursor thiazole. Catalyzes the conversion of NAD and glycine to adenosine diphosphate 5-(2-hydroxyethyl)-4-methylthiazole-2-carboxylic acid (ADT), an adenylated thiazole intermediate. The reaction includes an iron-dependent sulfide transfer from a conserved cysteine residue of the protein to a thiazole intermediate. The enzyme can only undergo a single turnover, which suggests it is a suicide enzyme. May have additional roles in adaptation to various stress conditions and in DNA damage tolerance. This is Thiamine thiazole synthase 1, chloroplastic from Sorghum bicolor (Sorghum).